The following is a 225-amino-acid chain: MSSQALDSAKVAFIEAAIEHGVLLFGNFTLKSGRQSPYFFNAGLLYSSSLLSTTAQAYAKVLSSSRIPDFDVLFGPAYKGISLAAVSAVSLYQQTGKDIGYCYNRKEKKDHGEGGTMVGAPLKGRIVIIDDVLTSGKAIREAIDILKASPEAKLVGIVQLVDRQEKGQSGSGKSTVQEVEEEFGVPVEPIIGLDDIVKYLESSGKWEKELQEVRKYRAEYGVQRS.

Lysine 31 contributes to the 5-phospho-alpha-D-ribose 1-diphosphate binding site. Orotate is bound at residue 39-40 (FF). Residues 78-79 (YK), arginine 105, lysine 106, lysine 109, histidine 111, and 130-138 (DDVLTSGKA) each bind 5-phospho-alpha-D-ribose 1-diphosphate. Positions 134 and 163 each coordinate orotate.

It belongs to the purine/pyrimidine phosphoribosyltransferase family. PyrE subfamily. In terms of assembly, homodimer.

The enzyme catalyses orotidine 5'-phosphate + diphosphate = orotate + 5-phospho-alpha-D-ribose 1-diphosphate. Its pathway is pyrimidine metabolism; UMP biosynthesis via de novo pathway; UMP from orotate: step 1/2. Functionally, catalyzes the transfer of a ribosyl phosphate group from 5-phosphoribose 1-diphosphate to orotate, leading to the formation of orotidine monophosphate (OMP). The polypeptide is Orotate phosphoribosyltransferase (URA5) (Cryptococcus neoformans var. neoformans serotype D (strain B-3501A) (Filobasidiella neoformans)).